Reading from the N-terminus, the 205-residue chain is Large ribosomal subunit protein bL21 (205 aa).

The interval 107–137 (APAKKAAAKKEEAPKADTAPKAAAAPTEEAA) is disordered. The segment covering 122–137 (ADTAPKAAAAPTEEAA) has biased composition (low complexity).

The protein belongs to the bacterial ribosomal protein bL21 family. As to quaternary structure, part of the 50S ribosomal subunit. Contacts protein L20.

Its function is as follows. This protein binds to 23S rRNA in the presence of protein L20. The chain is Large ribosomal subunit protein bL21 from Hyphomonas neptunium (strain ATCC 15444).